The following is a 420-amino-acid chain: Glycerol-3-phosphate dehydrogenase [NAD(+)] 2, chloroplastic (420 aa).

A chloroplast-targeting transit peptide spans 1–45 (MAASVQPACLDLHFSGKHPPLLKHNAIIVRCVSSPNVIPEADSIS). NAD(+)-binding positions include 94 to 99 (GGGSFG), Phe-171, Lys-194, and Ala-228. Lys-194 lines the substrate pocket. Lys-279 acts as the Proton acceptor in catalysis. NAD(+)-binding residues include Arg-343 and Glu-369. Residue 343 to 344 (RN) participates in substrate binding.

It belongs to the NAD-dependent glycerol-3-phosphate dehydrogenase family.

The protein localises to the plastid. The protein resides in the chloroplast. The catalysed reaction is sn-glycerol 3-phosphate + NAD(+) = dihydroxyacetone phosphate + NADH + H(+). It participates in membrane lipid metabolism; glycerophospholipid metabolism. In terms of biological role, required to supply glycerol-3-phosphate in the chloroplast for the synthesis of glycerolipids. Required for activation of systemic acquired resistance (SAR). Provision of glycerol-3-phosphate may be involved in generating lipid signals necessary for mediating defense responses and SAR. The chain is Glycerol-3-phosphate dehydrogenase [NAD(+)] 2, chloroplastic (GLY1) from Arabidopsis thaliana (Mouse-ear cress).